Consider the following 267-residue polypeptide: Small ribosomal subunit protein uS2 (267 aa).

Residues 247-267 are disordered; that stretch reads LEDDILEDVEDEEEGDPEQGE.

This sequence belongs to the universal ribosomal protein uS2 family.

This is Small ribosomal subunit protein uS2 from Synechococcus sp. (strain JA-3-3Ab) (Cyanobacteria bacterium Yellowstone A-Prime).